The primary structure comprises 265 residues: Capsule polysaccharide export inner-membrane protein CtrC (265 aa).

6 helical membrane-spanning segments follow: residues 37 to 57 (IGFL…VLMW), 64 to 84 (NVSA…MMMW), 121 to 141 (IAGA…IGWI), 147 to 167 (IFYM…LGLV), 178 to 198 (FGKV…VFFF), and 236 to 256 (NPWY…AVVA). The region spanning 37–258 (IGFLWLFVEP…LLGLAVVARF (222 aa)) is the ABC transmembrane type-2 domain.

Belongs to the ABC-2 integral membrane protein family.

The protein localises to the cell inner membrane. Functionally, may form an ATP-driven capsule polysaccharide export apparatus, in association with the CtrB and CtrD proteins. The polypeptide is Capsule polysaccharide export inner-membrane protein CtrC (ctrC) (Neisseria meningitidis serogroup A / serotype 4A (strain DSM 15465 / Z2491)).